A 133-amino-acid polypeptide reads, in one-letter code: Sec-independent protein translocase protein TatB (133 aa).

A helical membrane pass occupies residues 1-21 (MFDIGFWELVLIAIVALVVLG). The interval 67-133 (EQMGMQNLSP…ASQPAEKKAE (67 aa)) is disordered. Residues 70–84 (GMQNLSPELQKSVES) are compositionally biased toward polar residues. A compositionally biased stretch (low complexity) spans 97–116 (AATPSSEASSTSSNPSSATE).

The protein belongs to the TatB family. As to quaternary structure, the Tat system comprises two distinct complexes: a TatABC complex, containing multiple copies of TatA, TatB and TatC subunits, and a separate TatA complex, containing only TatA subunits. Substrates initially bind to the TatABC complex, which probably triggers association of the separate TatA complex to form the active translocon.

Its subcellular location is the cell inner membrane. In terms of biological role, part of the twin-arginine translocation (Tat) system that transports large folded proteins containing a characteristic twin-arginine motif in their signal peptide across membranes. Together with TatC, TatB is part of a receptor directly interacting with Tat signal peptides. TatB may form an oligomeric binding site that transiently accommodates folded Tat precursor proteins before their translocation. The polypeptide is Sec-independent protein translocase protein TatB (Vibrio cholerae serotype O1 (strain ATCC 39315 / El Tor Inaba N16961)).